A 167-amino-acid polypeptide reads, in one-letter code: General odorant-binding protein 1 (167 aa).

An N-terminal signal peptide occupies residues 1-22 (MAHTLQTVVLLLGTSILHPILA). 3 cysteine pairs are disulfide-bonded: C41/C76, C72/C130, and C119/C139.

The protein belongs to the PBP/GOBP family. As to expression, antenna.

Functionally, present in the aqueous fluid surrounding olfactory sensory dendrites and are thought to aid in the capture and transport of hydrophobic odorants into and through this fluid. The sequence is that of General odorant-binding protein 1 from Antheraea pernyi (Chinese oak silk moth).